A 632-amino-acid polypeptide reads, in one-letter code: Bestrophin homolog 24 (632 aa).

The next 4 membrane-spanning stretches (helical) occupy residues 28–48 (IWKAVILELAVWLVLYGILSV), 83–103 (GFFVTAVVNRWTYLYQIIGFI), 234–254 (IMYPQLVCLAVHTYFLVCLLA), and 271–291 (LYFPIMSTLQFIFYMGWMKVA). Disordered regions lie at residues 491 to 516 (LSNKRIDTSSSQPQLATGKRGSEHPF) and 562 to 632 (ETEV…TKFE). Positions 563–602 (TEVKRDEKKKKEEELREEGDNGKEEKDNKEDKKEEQDRPS) are enriched in basic and acidic residues. Residues 623-632 (PHLRPPTKFE) are compositionally biased toward basic residues.

The protein belongs to the anion channel-forming bestrophin (TC 1.A.46) family. Calcium-sensitive chloride channel subfamily. In terms of assembly, forms oligomers.

It is found in the cell membrane. Forms chloride channels. The protein is Bestrophin homolog 24 (best-24) of Caenorhabditis elegans.